Reading from the N-terminus, the 184-residue chain is Ribosome-recycling factor (184 aa).

Belongs to the RRF family.

The protein resides in the cytoplasm. Its function is as follows. Responsible for the release of ribosomes from messenger RNA at the termination of protein biosynthesis. May increase the efficiency of translation by recycling ribosomes from one round of translation to another. This chain is Ribosome-recycling factor, found in Acinetobacter baumannii (strain SDF).